A 139-amino-acid chain; its full sequence is ATP synthase epsilon chain (139 aa).

It belongs to the ATPase epsilon chain family. In terms of assembly, F-type ATPases have 2 components, CF(1) - the catalytic core - and CF(0) - the membrane proton channel. CF(1) has five subunits: alpha(3), beta(3), gamma(1), delta(1), epsilon(1). CF(0) has three main subunits: a, b and c.

It is found in the cell inner membrane. Its function is as follows. Produces ATP from ADP in the presence of a proton gradient across the membrane. The protein is ATP synthase epsilon chain of Haemophilus ducreyi (strain 35000HP / ATCC 700724).